The following is a 130-amino-acid chain: Putative ankyrin repeat protein R886 (130 aa).

ANK repeat units follow at residues 21–50 (NYDR…DITA), 54–83 (YGFT…SIIK), and 85–113 (DNLT…DIRY).

This Acanthamoeba polyphaga (Amoeba) protein is Putative ankyrin repeat protein R886.